Consider the following 238-residue polypeptide: tRNA (guanine-N(7)-)-methyltransferase (238 aa).

S-adenosyl-L-methionine contacts are provided by Glu68, Glu93, Asp120, and Asp143. Asp143 is a catalytic residue. Substrate contacts are provided by residues Lys147, Asp179, and 216–219 (TKFE).

This sequence belongs to the class I-like SAM-binding methyltransferase superfamily. TrmB family.

It catalyses the reaction guanosine(46) in tRNA + S-adenosyl-L-methionine = N(7)-methylguanosine(46) in tRNA + S-adenosyl-L-homocysteine. Its pathway is tRNA modification; N(7)-methylguanine-tRNA biosynthesis. Functionally, catalyzes the formation of N(7)-methylguanine at position 46 (m7G46) in tRNA. The polypeptide is tRNA (guanine-N(7)-)-methyltransferase (Ectopseudomonas mendocina (strain ymp) (Pseudomonas mendocina)).